We begin with the raw amino-acid sequence, 499 residues long: Putative protease Do-like 12, mitochondrial (499 aa).

Residues 1 to 24 constitute a mitochondrion transit peptide; it reads MLFRSCVGMVSRYSRALLPTITIS. Positions 94 to 259 are serine protease; sequence GGSGFAIAGK…IPTPIIRHFI (166 aa). Residues H110, D144, and S222 each act as charge relay system in the active site. Residues 272–356 enclose the PDZ domain; the sequence is GSLVLSCQSM…DENILVKVLR (85 aa).

This sequence belongs to the peptidase S1C family.

It is found in the mitochondrion matrix. In terms of biological role, putative serine protease. The sequence is that of Putative protease Do-like 12, mitochondrial (DEGP12) from Arabidopsis thaliana (Mouse-ear cress).